The following is a 446-amino-acid chain: Glutamate--tRNA ligase 2 (446 aa).

The 'HIGH' region signature appears at 8–18 (PSPTGYLHIGN). A 'KMSKS' region motif is present at residues 239-243 (GLSKR). Lys242 contributes to the ATP binding site.

It belongs to the class-I aminoacyl-tRNA synthetase family. Glutamate--tRNA ligase type 1 subfamily. As to quaternary structure, monomer.

Its subcellular location is the cytoplasm. It carries out the reaction tRNA(Glu) + L-glutamate + ATP = L-glutamyl-tRNA(Glu) + AMP + diphosphate. Functionally, catalyzes the attachment of glutamate to tRNA(Glu) in a two-step reaction: glutamate is first activated by ATP to form Glu-AMP and then transferred to the acceptor end of tRNA(Glu). This is Glutamate--tRNA ligase 2 from Methylobacterium radiotolerans (strain ATCC 27329 / DSM 1819 / JCM 2831 / NBRC 15690 / NCIMB 10815 / 0-1).